The primary structure comprises 211 residues: Arginine exporter protein ArgO (211 aa).

Helical transmembrane passes span 1 to 21, 37 to 57, 68 to 88, 111 to 131, 147 to 167, and 182 to 202; these read MFSY…PLGP, IMIA…GIFG, LLAL…FGAF, IIAT…DTFV, WFAL…AILA, and IINL…ARDG.

Belongs to the LysE/ArgO transporter (TC 2.A.75) family.

It is found in the cell inner membrane. The catalysed reaction is L-arginine(in) = L-arginine(out). Its function is as follows. Involved in the export of arginine. Important to control the intracellular level of arginine and the correct balance between arginine and lysine. This Escherichia coli O157:H7 protein is Arginine exporter protein ArgO.